Here is an 860-residue protein sequence, read N- to C-terminus: Leucine--tRNA ligase (860 aa).

The short motif at Pro-42–His-52 is the 'HIGH' region element. Positions Lys-619–Ser-623 match the 'KMSKS' region motif. ATP is bound at residue Lys-622.

Belongs to the class-I aminoacyl-tRNA synthetase family.

Its subcellular location is the cytoplasm. It carries out the reaction tRNA(Leu) + L-leucine + ATP = L-leucyl-tRNA(Leu) + AMP + diphosphate. The chain is Leucine--tRNA ligase from Actinobacillus succinogenes (strain ATCC 55618 / DSM 22257 / CCUG 43843 / 130Z).